The following is a 21-amino-acid chain: Putative NADH dehydrogenase subunit PS9 (21 aa).

The polypeptide is Putative NADH dehydrogenase subunit PS9 (Pinus strobus (Eastern white pine)).